The primary structure comprises 506 residues: Histidine ammonia-lyase (506 aa).

Residues 143–145 (ASG) constitute a cross-link (5-imidazolinone (Ala-Gly)). 2,3-didehydroalanine (Ser) is present on serine 144.

This sequence belongs to the PAL/histidase family. Contains an active site 4-methylidene-imidazol-5-one (MIO), which is formed autocatalytically by cyclization and dehydration of residues Ala-Ser-Gly.

Its subcellular location is the cytoplasm. It catalyses the reaction L-histidine = trans-urocanate + NH4(+). It participates in amino-acid degradation; L-histidine degradation into L-glutamate; N-formimidoyl-L-glutamate from L-histidine: step 1/3. The sequence is that of Histidine ammonia-lyase from Salmonella choleraesuis (strain SC-B67).